The chain runs to 546 residues: Glucose-6-phosphate isomerase (546 aa).

The active-site Proton donor is the glutamate 352. Active-site residues include histidine 383 and lysine 511.

This sequence belongs to the GPI family.

The protein resides in the cytoplasm. The catalysed reaction is alpha-D-glucose 6-phosphate = beta-D-fructose 6-phosphate. Its pathway is carbohydrate biosynthesis; gluconeogenesis. It functions in the pathway carbohydrate degradation; glycolysis; D-glyceraldehyde 3-phosphate and glycerone phosphate from D-glucose: step 2/4. In terms of biological role, catalyzes the reversible isomerization of glucose-6-phosphate to fructose-6-phosphate. This chain is Glucose-6-phosphate isomerase, found in Paramagnetospirillum magneticum (strain ATCC 700264 / AMB-1) (Magnetospirillum magneticum).